Here is a 1584-residue protein sequence, read N- to C-terminus: Dicer-like protein 1 (1584 aa).

The disordered stretch occupies residues 31-60; sequence EDVVSDNDDRGNASDVESEDGVKRWTVNPE. Residues 129–310 enclose the Helicase ATP-binding domain; it reads LFERAKQQNT…RAAAELEALL (182 aa). An ATP-binding site is contributed by 142 to 149; it reads LDTGSGKT. The short motif at 255–258 is the DEAH box element; that stretch reads DEAH. In terms of domain architecture, Helicase C-terminal spans 448-621; the sequence is KVIMLVRILR…EALPEDRKLT (174 aa). Residues 654–744 enclose the Dicer dsRNA-binding fold domain; sequence SLVCLANFTA…QSVFTKQLPE (91 aa). A PAZ domain is found at 894-1028; sequence KALAYVSENE…LILEPMRISP (135 aa). RNase III domains follow at residues 1052–1207 and 1258–1424; these read VALD…LTGQ and AKKF…VDSE. Residues Glu-1298, Asp-1410, and Glu-1413 each coordinate Mg(2+). A DRBM domain is found at 1458 to 1545; it reads TFVANMMAHK…AKKAIKLLEG (88 aa). The Zn(2+) site is built by Cys-1470, His-1516, Cys-1557, and Cys-1559.

It belongs to the helicase family. Dicer subfamily. Requires Mg(2+) as cofactor. Mn(2+) serves as cofactor.

In terms of biological role, dicer-like endonuclease involved in cleaving double-stranded RNA in the RNA interference (RNAi) pathway. Produces 21 to 25 bp dsRNAs (siRNAs) which target the selective destruction of homologous RNAs leading to sequence-specific suppression of gene expression, called post-transcriptional gene silencing (PTGS). Part of a broad host defense response against viral infection and transposons. Controls the expression of the non-LTR retrotransposon Tad in the African strain, Adiomopoume. The sequence is that of Dicer-like protein 1 (dcl-1) from Neurospora crassa (strain ATCC 24698 / 74-OR23-1A / CBS 708.71 / DSM 1257 / FGSC 987).